The following is an 855-amino-acid chain: Suppressor of tumorigenicity 14 protein homolog (855 aa).

The Cytoplasmic segment spans residues 1 to 55 (MGSNRGRKAGGGSQDFGAGLKYNSRLENMNGFEEGVEFLPANNAKKVEKRGPRRW). S13 is modified (phosphoserine). A helical; Signal-anchor for type II membrane protein membrane pass occupies residues 56–76 (VVLVAVLFSFLLLSLMAGLLV). Residues 77–855 (WHFHYRNVRV…RDWIKEHTGV (779 aa)) are Extracellular-facing. Positions 86–203 (VQKVFNGHLR…TSVVAFPIDP (118 aa)) constitute an SEA domain. The N-linked (GlcNAc...) asparagine glycan is linked to N107. C214 and C244 are oxidised to a cystine. 2 consecutive CUB domains span residues 214-331 (CSFA…EATF) and 340-444 (CGGF…LAEY). N-linked (GlcNAc...) asparagine glycosylation is found at N302 and N365. 2 cysteine pairs are disulfide-bonded: C340-C366 and C397-C410. N421 is a glycosylation site (N-linked (GlcNAc...) asparagine). 4 consecutive LDL-receptor class A domains span residues 451–488 (DPCPGMFMCKTGRCIRKELRCDGWADCPDYSDERYCRC), 489–522 (NATHQFTCKNQFCKPLFWVCDSVNDCGDGSDEEG), 523–561 (CSCPAGSFKCSNGKCLPQSQKCNGKDNCGDGSDEASCDS), and 565–604 (VSCTKYTYRCQNGLCLSKGNPECDGKTDCSDGSDEKNCDC). Intrachain disulfides connect C453–C464, C459–C477, C471–C486, C488–C501, C496–C514, C508–C523, C525–C537, C532–C550, C544–C559, C567–C579, C574–C593, C587–C602, and C641–C657. N-linked (GlcNAc...) asparagine glycosylation occurs at N489. The Peptidase S1 domain occupies 615-854 (VVGGTNADEG…VRDWIKEHTG (240 aa)). Residues H656 and D711 each act as charge relay system in the active site. N772 carries an N-linked (GlcNAc...) asparagine glycan. 2 disulfides stabilise this stretch: C776-C790 and C801-C830. S805 acts as the Charge relay system in catalysis.

This sequence belongs to the peptidase S1 family. As to quaternary structure, interacts with CDCP1. May interact with TMEFF1. Highly expressed in intestine, kidney, lung, and thymus. Not expressed in skeletal muscle, liver, heart, testis and brain.

It is found in the membrane. The enzyme catalyses Cleaves various synthetic substrates with Arg or Lys at the P1 position and prefers small side-chain amino acids, such as Ala and Gly, at the P2 position.. In terms of biological role, exhibits trypsin-like activity as defined by cleavage of synthetic substrates with Arg or Lys as the P1 site. Involved in the terminal differentiation of keratinocytes through prostasin (PRSS8) activation and filaggrin (FLG) processing. Proteolytically cleaves and therefore activates TMPRSS13. In Mus musculus (Mouse), this protein is Suppressor of tumorigenicity 14 protein homolog (St14).